Reading from the N-terminus, the 848-residue chain is Neuroligin-3 (848 aa).

A signal peptide spans 1-37; it reads MWLQLGLPSLSLSPTPTVGRSLCLILWFLSLVLRAST. Residues 38–709 lie on the Extracellular side of the membrane; the sequence is QAPAPTVNTH…NPRDYSTELS (672 aa). Asparagine 98 carries an N-linked (GlcNAc...) asparagine glycan. Cysteine 106 and cysteine 141 are oxidised to a cystine. A disordered region spans residues 169–195; that stretch reads CRKGGSGAKKQGEDLADNDGDEDEDIR. The span at 182–194 shows a compositional bias: acidic residues; the sequence is DLADNDGDEDEDI. Intrachain disulfides connect cysteine 340/cysteine 351 and cysteine 510/cysteine 544. Asparagine 545 carries an N-linked (GlcNAc...) asparagine glycan. Composition is skewed to polar residues over residues 645 to 656 and 677 to 689; these read TKVPPPDTTHSS and AYSN…SWNG. The interval 645-691 is disordered; it reads TKVPPPDTTHSSHITRRPNGKTWSTKRPAISPAYSNENAPGSWNGDQ. A helical membrane pass occupies residues 710-730; it reads VTIAVGASLLFLNVLAFAALY. The Cytoplasmic portion of the chain corresponds to 731–848; the sequence is YRKDKRRQEP…LPNSHSTTRV (118 aa). Serine 745 carries the post-translational modification Phosphoserine. At tyrosine 792 the chain carries Phosphotyrosine.

This sequence belongs to the type-B carboxylesterase/lipase family. As to quaternary structure, homodimer, and heterodimer with NLGN1 and NLGN2. Interacts with neurexins NRXN1, NRXN2 and NRXN3. Interaction with neurexins is mediated by heparan sulfate glycan modification on neurexin. Interacts (via its C-terminus) with DLG4/PSD-95 (via PDZ domain 3). The N-terminus is blocked. Detected in brain and on hippocampus neurons, especially at excitatory synapses. Detected in retina (at protein level). Expressed in brain, spinal cord and dorsal root ganglion.

It is found in the cell membrane. The protein resides in the synapse. Its function is as follows. Cell surface protein involved in cell-cell-interactions via its interactions with neurexin family members. Plays a role in synapse function and synaptic signal transmission, and probably mediates its effects by recruiting and clustering other synaptic proteins. May promote the initial formation of synapses, but is not essential for this. May also play a role in glia-glia or glia-neuron interactions in the developing peripheral nervous system. The chain is Neuroligin-3 (Nlgn3) from Rattus norvegicus (Rat).